Reading from the N-terminus, the 116-residue chain is Iron-sulfur cluster insertion protein ErpA (116 aa).

3 residues coordinate iron-sulfur cluster: cysteine 44, cysteine 108, and cysteine 110.

The protein belongs to the HesB/IscA family. Homodimer. Iron-sulfur cluster serves as cofactor.

Its function is as follows. Required for insertion of 4Fe-4S clusters for at least IspG. The sequence is that of Iron-sulfur cluster insertion protein ErpA from Aeromonas salmonicida (strain A449).